The following is a 571-amino-acid chain: Sulfite reductase [NADPH] hemoprotein beta-component (571 aa).

Cys436, Cys442, Cys481, and Cys485 together coordinate [4Fe-4S] cluster. Cys485 is a siroheme binding site.

It belongs to the nitrite and sulfite reductase 4Fe-4S domain family. As to quaternary structure, alpha(8)-beta(8). The alpha component is a flavoprotein, the beta component is a hemoprotein. Requires siroheme as cofactor. [4Fe-4S] cluster serves as cofactor.

It carries out the reaction hydrogen sulfide + 3 NADP(+) + 3 H2O = sulfite + 3 NADPH + 4 H(+). It functions in the pathway sulfur metabolism; hydrogen sulfide biosynthesis; hydrogen sulfide from sulfite (NADPH route): step 1/1. Component of the sulfite reductase complex that catalyzes the 6-electron reduction of sulfite to sulfide. This is one of several activities required for the biosynthesis of L-cysteine from sulfate. The sequence is that of Sulfite reductase [NADPH] hemoprotein beta-component from Anoxybacillus flavithermus (strain DSM 21510 / WK1).